A 296-amino-acid polypeptide reads, in one-letter code: Large ribosomal subunit protein uL18A (296 aa).

The tract at residues 251–296 (PVHEKKPKKEVKKKRWNRAKLSLEQKKDRVAQKKASFLRAQEKADS) is disordered. The span at 255 to 268 (KKPKKEVKKKRWNR) shows a compositional bias: basic residues. Over residues 271–281 (LSLEQKKDRVA) the composition is skewed to basic and acidic residues.

The protein belongs to the universal ribosomal protein uL18 family. Component of the large ribosomal subunit (LSU). Part of a LSU subcomplex, the 5S RNP which is composed of the 5S RNA, RPL5 and RPL11.

It is found in the cytoplasm. It localises to the nucleus. The protein localises to the nucleolus. Its function is as follows. Component of the ribosome, a large ribonucleoprotein complex responsible for the synthesis of proteins in the cell. The small ribosomal subunit (SSU) binds messenger RNAs (mRNAs) and translates the encoded message by selecting cognate aminoacyl-transfer RNA (tRNA) molecules. The large subunit (LSU) contains the ribosomal catalytic site termed the peptidyl transferase center (PTC), which catalyzes the formation of peptide bonds, thereby polymerizing the amino acids delivered by tRNAs into a polypeptide chain. The nascent polypeptides leave the ribosome through a tunnel in the LSU and interact with protein factors that function in enzymatic processing, targeting, and the membrane insertion of nascent chains at the exit of the ribosomal tunnel. As part of the 5S RNP/5S ribonucleoprotein particle it is an essential component of the LSU, required for its formation and the maturation of rRNAs. It also couples ribosome biogenesis to p53/TP53 activation. As part of the 5S RNP it accumulates in the nucleoplasm and inhibits MDM2, when ribosome biogenesis is perturbed, mediating the stabilization and the activation of TP53. This is Large ribosomal subunit protein uL18A (rpl5-a) from Xenopus laevis (African clawed frog).